Consider the following 289-residue polypeptide: 5'-adenylylsulfate reductase-like 7 (289 aa).

The N-terminal stretch at 1–23 (MNLWVSIFLVSAIAGSCLPSGFA) is a signal peptide. The Thioredoxin domain maps to 37-157 (SVIEQKCPRS…LIQFYKETTG (121 aa)). Asparagine 132 and asparagine 184 each carry an N-linked (GlcNAc...) asparagine glycan. Residues 198-218 (MVLALMFLSLKLAILIFPIMG) traverse the membrane as a helical segment.

Its subcellular location is the membrane. This Arabidopsis thaliana (Mouse-ear cress) protein is 5'-adenylylsulfate reductase-like 7 (APRL7).